The chain runs to 322 residues: NADH-quinone oxidoreductase subunit H (322 aa).

Transmembrane regions (helical) follow at residues valine 12–isoleucine 32, isoleucine 79–proline 99, valine 111–glycine 131, leucine 151–phenylalanine 171, leucine 183–valine 203, phenylalanine 234–phenylalanine 254, leucine 262–leucine 282, and valine 301–valine 321.

It belongs to the complex I subunit 1 family. NDH-1 is composed of 14 different subunits. Subunits NuoA, H, J, K, L, M, N constitute the membrane sector of the complex.

The protein localises to the cell inner membrane. The catalysed reaction is a quinone + NADH + 5 H(+)(in) = a quinol + NAD(+) + 4 H(+)(out). In terms of biological role, NDH-1 shuttles electrons from NADH, via FMN and iron-sulfur (Fe-S) centers, to quinones in the respiratory chain. The immediate electron acceptor for the enzyme in this species is believed to be ubiquinone. Couples the redox reaction to proton translocation (for every two electrons transferred, four hydrogen ions are translocated across the cytoplasmic membrane), and thus conserves the redox energy in a proton gradient. This subunit may bind ubiquinone. This chain is NADH-quinone oxidoreductase subunit H, found in Aeromonas salmonicida (strain A449).